The chain runs to 290 residues: ATP synthase gamma chain (290 aa).

Belongs to the ATPase gamma chain family. F-type ATPases have 2 components, CF(1) - the catalytic core - and CF(0) - the membrane proton channel. CF(1) has five subunits: alpha(3), beta(3), gamma(1), delta(1), epsilon(1). CF(0) has three main subunits: a, b and c.

Its subcellular location is the cell inner membrane. In terms of biological role, produces ATP from ADP in the presence of a proton gradient across the membrane. The gamma chain is believed to be important in regulating ATPase activity and the flow of protons through the CF(0) complex. This Thiobacillus denitrificans (strain ATCC 25259 / T1) protein is ATP synthase gamma chain.